The chain runs to 373 residues: UDP-N-acetylglucosamine--N-acetylmuramyl-(pentapeptide) pyrophosphoryl-undecaprenol N-acetylglucosamine transferase (373 aa).

Residues 13–15 (TGG), Asn-124, Arg-164, Ser-192, and Gln-293 contribute to the UDP-N-acetyl-alpha-D-glucosamine site.

The protein belongs to the glycosyltransferase 28 family. MurG subfamily.

Its subcellular location is the cell inner membrane. The catalysed reaction is di-trans,octa-cis-undecaprenyl diphospho-N-acetyl-alpha-D-muramoyl-L-alanyl-D-glutamyl-meso-2,6-diaminopimeloyl-D-alanyl-D-alanine + UDP-N-acetyl-alpha-D-glucosamine = di-trans,octa-cis-undecaprenyl diphospho-[N-acetyl-alpha-D-glucosaminyl-(1-&gt;4)]-N-acetyl-alpha-D-muramoyl-L-alanyl-D-glutamyl-meso-2,6-diaminopimeloyl-D-alanyl-D-alanine + UDP + H(+). It functions in the pathway cell wall biogenesis; peptidoglycan biosynthesis. Functionally, cell wall formation. Catalyzes the transfer of a GlcNAc subunit on undecaprenyl-pyrophosphoryl-MurNAc-pentapeptide (lipid intermediate I) to form undecaprenyl-pyrophosphoryl-MurNAc-(pentapeptide)GlcNAc (lipid intermediate II). This Allorhizobium ampelinum (strain ATCC BAA-846 / DSM 112012 / S4) (Agrobacterium vitis (strain S4)) protein is UDP-N-acetylglucosamine--N-acetylmuramyl-(pentapeptide) pyrophosphoryl-undecaprenol N-acetylglucosamine transferase.